We begin with the raw amino-acid sequence, 233 residues long: Purine nucleoside phosphorylase DeoD-type (233 aa).

Residue His-4 coordinates a purine D-ribonucleoside. Phosphate is bound by residues Gly-20, Arg-24, Arg-43, and 87-90 (RIGT). Residues 179 to 181 (EME) and 203 to 204 (SD) contribute to the a purine D-ribonucleoside site. The active-site Proton donor is the Asp-204.

It belongs to the PNP/UDP phosphorylase family. In terms of assembly, homohexamer; trimer of homodimers.

The enzyme catalyses a purine D-ribonucleoside + phosphate = a purine nucleobase + alpha-D-ribose 1-phosphate. It carries out the reaction a purine 2'-deoxy-D-ribonucleoside + phosphate = a purine nucleobase + 2-deoxy-alpha-D-ribose 1-phosphate. Its function is as follows. Catalyzes the reversible phosphorolytic breakdown of the N-glycosidic bond in the beta-(deoxy)ribonucleoside molecules, with the formation of the corresponding free purine bases and pentose-1-phosphate. This is Purine nucleoside phosphorylase DeoD-type from Helicobacter pylori (strain J99 / ATCC 700824) (Campylobacter pylori J99).